The chain runs to 424 residues: Putative pachytene checkpoint protein 2 (424 aa).

179 to 186 (GPPGTGKT) provides a ligand contact to ATP.

It belongs to the AAA ATPase family. PCH2 subfamily.

In terms of biological role, plays a key role in chromosome recombination during meiosis. This Caenorhabditis elegans protein is Putative pachytene checkpoint protein 2 (pch-2).